We begin with the raw amino-acid sequence, 283 residues long: MPRPPVVARTLPALRRALDDLRRRNATVALVPTMGALHDGHLSLVRLAKRRAAKVVVSVFVNPTQFAPHEDFGSYPRTWKADVAKLAAENVDLIWNPDVKTMYPEGFATRIGVDGPAIAGLEDRFRPHFFGGVATVVGKLFLQVRPDVAIFGSKDFQQLRVVTRMAADLDLGVKVIGAPTIRERDGLAMSSRNVYLTPEQRQVAPTLYRAMKETAKLLKAGRSAEAALAAGAKMITDAGFALDYLEARHAESLAPVGSIKDGPIRLLVAAKLGNTRLIDNVAV.

34–41 (MGALHDGH) is an ATP binding site. The active-site Proton donor is the His41. A (R)-pantoate-binding site is contributed by Gln65. Gln65 is a binding site for beta-alanine. Residue 152-155 (GSKD) coordinates ATP. Residue Gln158 participates in (R)-pantoate binding. ATP contacts are provided by residues Ile181 and 189 to 192 (MSSR).

This sequence belongs to the pantothenate synthetase family. In terms of assembly, homodimer.

The protein localises to the cytoplasm. It carries out the reaction (R)-pantoate + beta-alanine + ATP = (R)-pantothenate + AMP + diphosphate + H(+). It functions in the pathway cofactor biosynthesis; (R)-pantothenate biosynthesis; (R)-pantothenate from (R)-pantoate and beta-alanine: step 1/1. Its function is as follows. Catalyzes the condensation of pantoate with beta-alanine in an ATP-dependent reaction via a pantoyl-adenylate intermediate. This Rhodopseudomonas palustris (strain HaA2) protein is Pantothenate synthetase.